Consider the following 207-residue polypeptide: Neuroendocrine protein 7B2 (207 aa).

Residues 1-22 form the signal peptide; the sequence is MVSTMLSGLVLWLTFGWTPALA. A disulfide bridge links Cys116 with Cys125. Phosphoserine is present on residues Ser136 and Ser200. A disordered region spans residues 168 to 207; the sequence is KGGQRRKRRSVNPYLQGQRLDNVVAKKSVPHFSDEDKDPE.

It belongs to the 7B2 family. As to quaternary structure, interacts with PCSK2/PC2 early in the secretory pathway. Dissociation occurs at later stages. Proteolytically cleaved in the Golgi by a furin-like convertase to generate bioactive peptides. Post-translationally, sulfated on tyrosine residues.

Its subcellular location is the secreted. Functionally, acts as a molecular chaperone for PCSK2/PC2, preventing its premature activation in the regulated secretory pathway. Binds to inactive PCSK2 in the endoplasmic reticulum and facilitates its transport from there to later compartments of the secretory pathway where it is proteolytically matured and activated. Also required for cleavage of PCSK2 but does not appear to be involved in its folding. Plays a role in regulating pituitary hormone secretion. The C-terminal peptide inhibits PCSK2 in vitro. This chain is Neuroendocrine protein 7B2 (SCG5), found in Sus scrofa (Pig).